Here is a 135-residue protein sequence, read N- to C-terminus: U-myrmeciitoxin(01)-Mg7a (135 aa).

The signal sequence occupies residues 1-21; it reads MKLSCLSLALAIILLLAIVHS. The propeptide occupies 22 to 72; sequence PNMEVKALAGPEADAIGFADAFGEADAFGEADAFGEADAFGEADAFGEADA. A disordered region spans residues 69-95; the sequence is EADAKRSKSSSKTKPKKPKKPKKKIKI. Residues 75 to 93 show a composition bias toward basic residues; sequence SKSSSKTKPKKPKKPKKKI. Residue Ser-120 is glycosylated (O-linked (GalNAc...) serine). Thr-129 and Thr-130 each carry an O-linked (GalNAc...) threonine glycan.

This sequence belongs to the formicidae venom precursor-01 superfamily. Post-translationally, glycosylation is critical to maintaining the aqueous solubility of this protein, but does not directly contribute to its activity. As to expression, expressed by the venom gland.

The protein resides in the secreted. The protein localises to the target cell membrane. In terms of biological role, neurotoxin that triggers pain behavior and inflammation in mammals, and is paralytic and lethal to insects. Causes a time-dependent increase in cell leak current. May act by targeting membranes. This chain is U-myrmeciitoxin(01)-Mg7a, found in Myrmecia gulosa (Red bulldog ant).